Consider the following 390-residue polypeptide: Methionyl-tRNA formyltransferase, mitochondrial (390 aa).

The N-terminal 33 residues, 1 to 33, are a transit peptide targeting the mitochondrion; that stretch reads MRVLLRCCCGHLPVGGGAGRRSNPRWRALARLS.

This sequence belongs to the Fmt family.

It is found in the mitochondrion. The enzyme catalyses L-methionyl-tRNA(fMet) + (6R)-10-formyltetrahydrofolate = N-formyl-L-methionyl-tRNA(fMet) + (6S)-5,6,7,8-tetrahydrofolate + H(+). Functionally, methionyl-tRNA formyltransferase that formylates methionyl-tRNA in mitochondria and is crucial for translation initiation. In Bos taurus (Bovine), this protein is Methionyl-tRNA formyltransferase, mitochondrial (MTFMT).